We begin with the raw amino-acid sequence, 183 residues long: GMP synthase [glutamine-hydrolyzing] subunit A (183 aa).

The Glutamine amidotransferase type-1 domain maps to 3–183; that stretch reads HILVVDNHGQ…VFENFVAICE (181 aa). Cys-74 acts as the Nucleophile in catalysis. Residues His-162 and Glu-164 contribute to the active site.

As to quaternary structure, heterodimer composed of a glutamine amidotransferase subunit (A) and a GMP-binding subunit (B).

The catalysed reaction is XMP + L-glutamine + ATP + H2O = GMP + L-glutamate + AMP + diphosphate + 2 H(+). Its pathway is purine metabolism; GMP biosynthesis; GMP from XMP (L-Gln route): step 1/1. Its function is as follows. Catalyzes the synthesis of GMP from XMP. In Halobacterium salinarum (strain ATCC 700922 / JCM 11081 / NRC-1) (Halobacterium halobium), this protein is GMP synthase [glutamine-hydrolyzing] subunit A.